The chain runs to 140 residues: Large ribosomal subunit protein uL13 (140 aa).

The protein belongs to the universal ribosomal protein uL13 family. In terms of assembly, part of the 50S ribosomal subunit.

Its function is as follows. This protein is one of the early assembly proteins of the 50S ribosomal subunit, although it is not seen to bind rRNA by itself. It is important during the early stages of 50S assembly. The sequence is that of Large ribosomal subunit protein uL13 from Sulfurimonas denitrificans (strain ATCC 33889 / DSM 1251) (Thiomicrospira denitrificans (strain ATCC 33889 / DSM 1251)).